Reading from the N-terminus, the 895-residue chain is Protein translocase subunit SecA (895 aa).

Residues Gln-87, Gly-105 to Thr-109, and Asp-512 each bind ATP. Residues Thr-833 to Thr-852 show a composition bias toward basic and acidic residues. A disordered region spans residues Thr-833 to Tyr-895. Residues Cys-877, Cys-879, Cys-888, and His-889 each contribute to the Zn(2+) site. Basic residues predominate over residues Lys-883–Tyr-895.

The protein belongs to the SecA family. In terms of assembly, monomer and homodimer. Part of the essential Sec protein translocation apparatus which comprises SecA, SecYEG and auxiliary proteins SecDF-YajC and YidC. Requires Zn(2+) as cofactor.

Its subcellular location is the cell inner membrane. The protein localises to the cytoplasm. The enzyme catalyses ATP + H2O + cellular proteinSide 1 = ADP + phosphate + cellular proteinSide 2.. In terms of biological role, part of the Sec protein translocase complex. Interacts with the SecYEG preprotein conducting channel. Has a central role in coupling the hydrolysis of ATP to the transfer of proteins into and across the cell membrane, serving both as a receptor for the preprotein-SecB complex and as an ATP-driven molecular motor driving the stepwise translocation of polypeptide chains across the membrane. This is Protein translocase subunit SecA from Pasteurella multocida (strain Pm70).